Reading from the N-terminus, the 865-residue chain is Nitrogen regulatory protein nrfA (865 aa).

Disordered stretches follow at residues 1 to 75 (MEGI…DEMQ), 115 to 140 (RKER…PSGI), 177 to 227 (FDSP…QDQR), 557 to 605 (GSTD…RTAS), and 617 to 663 (LNGS…AGPT). Residues 32–46 (DDFTFDSPFSSSGSS) show a composition bias toward low complexity. Composition is skewed to basic and acidic residues over residues 115–126 (RKEREQQEREQQ) and 180–189 (PAEHPSHPSA). Residues 582 to 592 (ASVSDVRNQNQ) show a composition bias toward polar residues. Residues 665-689 (CTNCFTQTTPLWRRNPEGQPLCNAC) form a GATA-type zinc finger. The interval 713–854 (NRSSANTLAV…NHSIAGGQGA (142 aa)) is disordered. Polar residues-rich tracts occupy residues 715–724 (SSANTLAVGT) and 737–764 (IQHA…SNTL). Composition is skewed to low complexity over residues 771-786 (PIAA…AGVA) and 830-844 (PLAP…ANPA).

Its subcellular location is the nucleus. In terms of biological role, major nitrogen regulatory protein. This is Nitrogen regulatory protein nrfA (nrfA) from Penicillium urticae.